The following is a 396-amino-acid chain: Activity-regulated cytoskeleton-associated protein (396 aa).

Residues 54-78 (SKQVERELKGLHRSVGKLENNLDGY) are a coiled coil. The interval 89 to 100 (KSIKACLCRCQE) is interaction with SH3GL1 or SH3GL3. The segment at 177-207 (PPAAGELPEQESVEAQQYQSWGPGEDGQPSP) is disordered. Positions 195–214 (QSWGPGEDGQPSPGVDTQIF) are interaction with DNM2. Ser-260 carries the phosphoserine; by CaMK2 modification. Glycyl lysine isopeptide (Lys-Gly) (interchain with G-Cter in ubiquitin) cross-links involve residues Lys-268 and Lys-269. Position 278 is a phosphothreonine (Thr-278). The interval 356-396 (QDGLEQAAEPSGTPLPTEDETEALTPALTSESVASDRTQPE) is disordered. The segment covering 382–396 (ALTSESVASDRTQPE) has biased composition (polar residues).

It belongs to the ARC/ARG3.1 family. In terms of assembly, homooligomer; homooligomerizes into virion-like capsids. Interacts with SH3GL1/endophilin-2, SH3GL3/endophilin-3 and DNM2/DYN2. Interacts with CAMK2B (in the kinase inactive state); leading to target ARC to inactive synapses. Interacts with PSEN1. Interacts with GRIN2A and GRIN2B; inhibiting homooligomerization. Post-translationally, ubiquitinated by UBE3A, leading to its degradation by the proteasome, thereby promoting AMPA receptors (AMPARs) expression at synapses. Ubiquitinated by RNF216 at Lys-268 and Lys-269 limiting ARC protein levels induced by synaptic activity and thus regulating ARC-dependent forms of synaptic plasticity. In terms of processing, palmitoylation anchors the protein into the membrane by allowing direct insertion into the hydrophobic core of the lipid bilayer. Phosphorylation at Ser-260 by CaMK2 prevents homooligomerization into virion-like capsids by disrupting an interaction surface essential for high-order oligomerization. Phosphorylation by CaMK2 inhibits synaptic activity. In terms of tissue distribution, expressed in brain and testis. In primary visual cortex, detected in all cortical layers with the exception of layer 5: present at highest level in layers 2/3 and 4, the predominant sites of ocular dominance plasticity (at protein level). Also expressed in skin-migratory dendritic cells.

The protein resides in the extracellular vesicle membrane. It is found in the postsynaptic cell membrane. The protein localises to the synapse. Its subcellular location is the postsynaptic density. It localises to the early endosome membrane. The protein resides in the cell projection. It is found in the dendrite. The protein localises to the cytoplasm. Its subcellular location is the cytoskeleton. It localises to the cell cortex. The protein resides in the dendritic spine. It is found in the cytoplasmic vesicle. The protein localises to the secretory vesicle. Its subcellular location is the acrosome. It localises to the clathrin-coated vesicle membrane. Its function is as follows. Master regulator of synaptic plasticity that self-assembles into virion-like capsids that encapsulate RNAs and mediate intercellular RNA transfer in the nervous system. ARC protein is released from neurons in extracellular vesicles that mediate the transfer of ARC mRNA into new target cells, where ARC mRNA can undergo activity-dependent translation. ARC capsids are endocytosed and are able to transfer ARC mRNA into the cytoplasm of neurons. Acts as a key regulator of synaptic plasticity: required for protein synthesis-dependent forms of long-term potentiation (LTP) and depression (LTD) and for the formation of long-term memory. Regulates synaptic plasticity by promoting endocytosis of AMPA receptors (AMPARs) in response to synaptic activity: this endocytic pathway maintains levels of surface AMPARs in response to chronic changes in neuronal activity through synaptic scaling, thereby contributing to neuronal homeostasis. Acts as a postsynaptic mediator of activity-dependent synapse elimination in the developing cerebellum by mediating elimination of surplus climbing fiber synapses. Accumulates at weaker synapses, probably to prevent their undesired enhancement. This suggests that ARC-containing virion-like capsids may be required to eliminate synaptic material. Required to transduce experience into long-lasting changes in visual cortex plasticity and for long-term memory. Involved in postsynaptic trafficking and processing of amyloid-beta A4 (APP) via interaction with PSEN1. In addition to its role in synapses, also involved in the regulation of the immune system: specifically expressed in skin-migratory dendritic cells and regulates fast dendritic cell migration, thereby regulating T-cell activation. The protein is Activity-regulated cytoskeleton-associated protein of Mus musculus (Mouse).